A 1001-amino-acid polypeptide reads, in one-letter code: Protein MEI2-like 4 (1001 aa).

Residues 100–120 form a disordered region; sequence HANLPPSPWRPDQETGRQTDS. 2 RRM domains span residues 275–348 and 360–433; these read RTLF…YSIP and GTIV…TSRL. 2 disordered regions span residues 767-815 and 941-1001; these read GGPS…KKQY and FHSD…PAKD. Positions 793–803 are enriched in basic and acidic residues; sequence PGERMRSRRND. A compositionally biased stretch (polar residues) spans 978-994; it reads DISITSVNCDTSTNGVD.

In terms of biological role, probable RNA-binding protein that may play a role in growth regulation. The polypeptide is Protein MEI2-like 4 (ML4) (Oryza sativa subsp. japonica (Rice)).